Consider the following 209-residue polypeptide: Claudin-4 (209 aa).

The Cytoplasmic segment spans residues 1–9; sequence MASMGLQVT. The segment at 1–103 is interaction with EPHA2; the sequence is MASMGLQVTG…GVLLSVVGGK (103 aa). Residues 10-30 traverse the membrane as a helical segment; sequence GIALAVLGWLAVMLCCALPMW. At 31-81 the chain is on the extracellular side; it reads RVTAFIGSNIVTSQTIWEGLWMNCVVQSTGQMQCKVYDSLLALPQDLQAAR. The cysteines at positions 54 and 64 are disulfide-linked. Residues 82-102 form a helical membrane-spanning segment; the sequence is ALVIISIIVAALGVLLSVVGG. Topologically, residues 103–117 are cytoplasmic; it reads KCTNCLEDESAKAKT. A helical transmembrane segment spans residues 118–138; sequence MIVAGVVFLLAGLLVIVPVSW. At 139–160 the chain is on the extracellular side; that stretch reads TAHNIIQDFYNPLVASGQKREM. The helical transmembrane segment at 161 to 181 threads the bilayer; the sequence is GASLYVGWAASGLLLLGGGLL. The Cytoplasmic portion of the chain corresponds to 182–209; that stretch reads CCNCPPRTDKPYSAKYSAARSAAASNYV. Tyr208 is subject to Phosphotyrosine; by EPHA2. Positions 208-209 are interactions with TJP1, TJP2 and TJP3; it reads YV.

Belongs to the claudin family. In terms of assembly, interacts with EPHA2; phosphorylates CLDN4 and may regulate tight junctions. Directly interacts with TJP1/ZO-1, TJP2/ZO-2 and TJP3/ZO-3. Interacts with CLDN1. Interacts with CLDN8. In terms of processing, phosphorylated. Phosphorylation by EPHA2 is stimulated by EFNA1 and alters interaction with TJP1.

The protein resides in the cell junction. Its subcellular location is the tight junction. It localises to the cell membrane. Channel-forming tight junction protein that mediates paracellular chloride transport in the kidney. Plays a critical role in the paracellular reabsorption of filtered chloride in the kidney collecting ducts. Claudins play a major role in tight junction-specific obliteration of the intercellular space, through calcium-independent cell-adhesion activity. The chain is Claudin-4 (CLDN4) from Chlorocebus aethiops (Green monkey).